Reading from the N-terminus, the 132-residue chain is Seminal vesicle protein SVP-2 (132 aa).

Residues 1 to 14 (HLALLLILENQASG) form the signal peptide. Residues 33-81 (HKEEVEESESSRGQDFDKRRFWEKDDPTGEHVSVRHEHLEKSHIRFKED) show a composition bias toward basic and acidic residues. Disordered stretches follow at residues 33–104 (HKEE…LKRH) and 113–132 (VEDQ…MQRV). The propeptide occupies 104–132 (HDAMEELVSVEDQALANGADPGKSNMQRV).

It to the SVP-1/-3/-4 precursor, particularly in regions where protein processing must occur.

It localises to the secreted. This is Seminal vesicle protein SVP-2 from Cavia porcellus (Guinea pig).